The sequence spans 202 residues: Small ribosomal subunit protein uS4c (202 aa).

Positions 90 to 150 constitute an S4 RNA-binding domain; that stretch reads MRLDNVIFRL…NQRKSQAIIN (61 aa).

This sequence belongs to the universal ribosomal protein uS4 family. Part of the 30S ribosomal subunit. Contacts protein S5. The interaction surface between S4 and S5 is involved in control of translational fidelity.

The protein resides in the plastid. It is found in the chloroplast. Functionally, one of the primary rRNA binding proteins, it binds directly to 16S rRNA where it nucleates assembly of the body of the 30S subunit. In terms of biological role, with S5 and S12 plays an important role in translational accuracy. In Canalohypopterygium tamariscinum (Moss), this protein is Small ribosomal subunit protein uS4c (rps4).